Consider the following 253-residue polypeptide: uncharacterized protein (253 aa).

NADP(+) is bound by residues Ile17, Ser36, Asp62, Asn89, Lys123, Tyr158, Lys162, Val191, and Thr193. Residue Tyr158 is the Proton acceptor of the active site. The active-site Lowers pKa of active site Tyr is Lys162.

Belongs to the short-chain dehydrogenases/reductases (SDR) family.

It is found in the cytoplasm. The protein localises to the nucleus. This is an uncharacterized protein from Schizosaccharomyces pombe (strain 972 / ATCC 24843) (Fission yeast).